A 213-amino-acid chain; its full sequence is MEALYQSTNFLLQKVQHDLGRLEGTQNEQDAQVVVQCIYGDVITLKENCQTLDNYVSREPPARRQAARMRVDQLRADVHRVDMAVSAVHTRMTQRWRAATERDELLRTRYRPNDTALSIGDHELLLNDRLQSSHTHLDDLISQGSAVLENLKSQHLNLRGVGRKMHEIGQALGLSNSTLQVIDRRVREDWILFVIGCIVCCIFMYAFYRFWRG.

The Cytoplasmic portion of the chain corresponds to 1-189 (MEALYQSTNF…QVIDRRVRED (189 aa)). The helical; Anchor for type IV membrane protein transmembrane segment at 190-210 (WILFVIGCIVCCIFMYAFYRF) threads the bilayer. Residues 211–213 (WRG) lie on the Vesicular side of the membrane.

This sequence belongs to the GOSR2 family. Part of a unique SNARE complex.

It is found in the golgi apparatus. The protein localises to the cis-Golgi network membrane. The protein resides in the golgi apparatus membrane. It localises to the endoplasmic reticulum membrane. In terms of biological role, involved in transport of proteins from the cis/medial-Golgi to the trans-Golgi network. The sequence is that of Golgi SNAP receptor complex member 2 homolog memb-1 from Caenorhabditis elegans.